Consider the following 2936-residue polypeptide: Neurobeachin (2936 aa).

The interval 961 to 985 (ENIKKGKKGNVSTISGLSSQTAGAK) is disordered. The span at 970–982 (NVSTISGLSSQTA) shows a compositional bias: polar residues. Phosphoserine occurs at positions 1001 and 1004. Composition is skewed to polar residues over residues 1203 to 1220 (TSDGVSSVSERELASSTK) and 1231 to 1241 (TLETESSNSKA). Disordered regions lie at residues 1203 to 1222 (TSDGVSSVSERELASSTKGL), 1231 to 1265 (TLETESSNSKAVPNVDAGSIISDTERSDDGKESGK), and 1270 to 1289 (IQTTATTQAVQGRSSTQQDR). A compositionally biased stretch (basic and acidic residues) spans 1253 to 1265 (DTERSDDGKESGK). Positions 1270–1286 (IQTTATTQAVQGRSSTQ) are enriched in polar residues. The WD 1 repeat unit spans residues 1316–1358 (TTMFRIPEFKWSPMHQRLLTDLLFALETDVHVWRSHSTKSVMD). 4 disordered regions span residues 1480–1521 (QRDR…LSPI), 1639–1667 (PDTVKEKETPTPGEDIQLESSVPHTDSGM), 1701–1721 (VKKSQESLTEHPSEMLKPAPS), and 1830–1850 (TGAVDSGSSSSSSSSSFVNGA). Position 1519 is a phosphoserine (Ser-1519). A compositionally biased stretch (basic and acidic residues) spans 1701 to 1714 (VKKSQESLTEHPSE). Residues Ser-1704 and Ser-1707 each carry the phosphoserine modification. Low complexity predominate over residues 1835–1845 (SGSSSSSSSSS). Ser-2128 bears the Phosphoserine mark. Residues 2137–2245 (NLAGPVVLST…TVKKVVYSLP (109 aa)) enclose the BEACH-type PH domain. One can recognise a BEACH domain in the interval 2264 to 2553 (ATPRQLYKSS…QLLIEPHPPR (290 aa)). Phosphoserine is present on Ser-2565. 4 WD repeats span residues 2708–2751 (GHWD…HIIG), 2768–2808 (GHDH…RALE), 2850–2889 (EINDSTRAILLSSDGQNLVTGGDNGVVEVWQACDFKQLYI), and 2892–2931 (GCDAGIRAMDLSHDQRTLITGMASGSIVAFNIDFNRWHYE).

The protein belongs to the WD repeat neurobeachin family. In terms of assembly, interacts with RII subunit of PKA. As to expression, forebrain, brainstem and cerebellum.

It is found in the membrane. Its subcellular location is the endomembrane system. The protein resides in the postsynaptic cell membrane. Functionally, binds to type II regulatory subunits of protein kinase A and anchors/targets them to the membrane. May anchor the kinase to cytoskeletal and/or organelle-associated proteins. May have a role in membrane trafficking. This Mus musculus (Mouse) protein is Neurobeachin (Nbea).